We begin with the raw amino-acid sequence, 976 residues long: Ephrin type-A receptor 2 (976 aa).

Positions 1–23 are cleaved as a signal peptide; that stretch reads MELQAARACFALLWGCALAAAAA. The segment at 1 to 206 is mediates interaction with CLDN4; it reads MELQAARACF…YYKKCPELLQ (206 aa). Over 24–537 the chain is Extracellular; sequence AQGKEVVLLD…SPEGSGNLAV (514 aa). In terms of domain architecture, Eph LBD spans 28-206; sequence EVVLLDFAAA…YYKKCPELLQ (179 aa). Disulfide bonds link Cys-70-Cys-188 and Cys-105-Cys-115. Positions 328–432 constitute a Fibronectin type-III 1 domain; the sequence is PPSAPHYLTA…TSRSFRTASV (105 aa). 2 N-linked (GlcNAc...) asparagine glycosylation sites follow: Asn-407 and Asn-435. Positions 438–529 constitute a Fibronectin type-III 2 domain; it reads EPPKVRLEGR…KVHEFQTLSP (92 aa). Residues 538-558 traverse the membrane as a helical segment; it reads IGGVAVGVVLLLVLAGVGFFI. Residues 559–976 lie on the Cytoplasmic side of the membrane; the sequence is HRRRKNQRAR…DQVNTVGIPI (418 aa). Ser-570 is subject to Phosphoserine. The residue at position 575 (Tyr-575) is a Phosphotyrosine. At Ser-579 the chain carries Phosphoserine. The residue at position 588 (Tyr-588) is a Phosphotyrosine; by autocatalysis. Position 594 is a phosphotyrosine (Tyr-594). The segment at 606-906 is mediates interaction with ARHGEF16 and ELMO2; sequence TEIHPSCVTR…STSGSEGVPF (301 aa). Positions 613-875 constitute a Protein kinase domain; it reads VTRQKVIGAG…DIVSILDKLI (263 aa). 619-627 is an ATP binding site; sequence IGAGEFGEV. Position 628 is a phosphotyrosine (Tyr-628). Lys-646 is a binding site for ATP. Position 647 is a phosphothreonine (Thr-647). Tyr-735 is modified (phosphotyrosine; by autocatalysis). Asp-739 functions as the Proton acceptor in the catalytic mechanism. Position 772 is a phosphotyrosine (Tyr-772). 2 positions are modified to phosphoserine: Ser-869 and Ser-892. The interval 886–976 is negatively regulates interaction with ARHGEF16; that stretch reads DFDPRVSIRL…DQVNTVGIPI (91 aa). At Ser-897 the chain carries Phosphoserine; by PKB/AKT1, RPS6KA1, RPS6KA3 AND PKA. Ser-901 carries the phosphoserine modification. Residues 904-968 enclose the SAM domain; the sequence is VPFRTVSEWL…AYSLLGLKDQ (65 aa). The residue at position 921 (Tyr-921) is a Phosphotyrosine; by autocatalysis. The residue at position 930 (Tyr-930) is a Phosphotyrosine. Positions 974–976 match the PDZ-binding motif; it reads IPI.

This sequence belongs to the protein kinase superfamily. Tyr protein kinase family. Ephrin receptor subfamily. Homodimer. Interacts with SLA. Interacts (phosphorylated form) with VAV2, VAV3 and PI3-kinase p85 subunit (PIK3R1, PIK3R2 or PIK3R3); critical for the EFNA1-induced activation of RAC1 which stimulates cell migration. Interacts with INPPL1; regulates activated EPHA2 endocytosis and degradation. Interacts (inactivated form) with PTK2/FAK1 and interacts (EFNA1 ligand-activated form) with PTPN11; regulates integrin-mediated adhesion. Interacts with ARHGEF16, DOCK4 and ELMO2; mediates ligand-independent activation of RAC1 which stimulates cell migration. Interacts with CLDN4; phosphorylates CLDN4 and may regulate tight junctions. Interacts with ACP1. Interacts (via SAM domain) with ANKS1A (via SAM domain). Interacts with CEMIP. Interacts with NCK1; may regulate EPHA2 activity in cell migration and adhesion. Interacts with TIMD4. As to quaternary structure, (Microbial infection) Interacts with human herpes virus 8/HHV-8 glycoprotein L/gL and glycoprotein H/gH heterodimer; this interaction triggers EPHA2 phosphorylation and endocytosis, allowing virus entry. In terms of assembly, (Microbial infection) Interacts with human cytomegalovirus (HCMV) glycoprotein L/gL and glycoprotein H/gH heterodimer. (Microbial infection) Interacts with Epstein-Barr virus/HHV-4 glycoprotein L/gL and glycoprotein H/gH heterodimer; this interaction facilitates virus internalization and fusion. Autophosphorylates. Phosphorylated on tyrosine upon binding and activation by EFNA1. Phosphorylated residues Tyr-588 and Tyr-594 are required for binding VAV2 and VAV3 while phosphorylated residues Tyr-735 and Tyr-930 are required for binding PI3-kinase p85 subunit (PIK3R1, PIK3R2 or PIK3R3). These phosphorylated residues are critical for recruitment of VAV2 and VAV3 and PI3-kinase p85 subunit which transduce downstream signaling to activate RAC1 GTPase and cell migration. Dephosphorylation of Tyr-930 by PTPRF prevents the interaction of EPHA2 with NCK1. Phosphorylated at Ser-897 by PKB; serum-induced phosphorylation which targets EPHA2 to the cell leading edge and stimulates cell migration. Phosphorylation by PKB is inhibited by EFNA1-activated EPHA2 which regulates PKB activity via a reciprocal regulatory loop. Phosphorylated at Ser-897 in response to TNF by RPS6KA1 and RPS6KA3; RPS6KA-EPHA2 signaling pathway controls cell migration. Phosphorylated at Ser-897 by PKA; blocks cell retraction induced by EPHA2 kinase activity. Dephosphorylated by ACP1. In terms of processing, ubiquitinated by CHIP/STUB1. Ubiquitination is regulated by the HSP90 chaperone and regulates the receptor stability and activity through proteasomal degradation. ANKS1A prevents ubiquitination and degradation. In terms of tissue distribution, expressed in brain and glioma tissue and glioma cell lines (at protein level). Expressed most highly in tissues that contain a high proportion of epithelial cells, e.g. skin, intestine, lung, and ovary.

It is found in the cell membrane. It localises to the cell projection. Its subcellular location is the ruffle membrane. The protein localises to the lamellipodium membrane. The protein resides in the cell junction. It is found in the focal adhesion. The catalysed reaction is L-tyrosyl-[protein] + ATP = O-phospho-L-tyrosyl-[protein] + ADP + H(+). Receptor tyrosine kinase which binds promiscuously membrane-bound ephrin-A family ligands residing on adjacent cells, leading to contact-dependent bidirectional signaling into neighboring cells. The signaling pathway downstream of the receptor is referred to as forward signaling while the signaling pathway downstream of the ephrin ligand is referred to as reverse signaling. Activated by the ligand ephrin-A1/EFNA1 regulates migration, integrin-mediated adhesion, proliferation and differentiation of cells. Regulates cell adhesion and differentiation through DSG1/desmoglein-1 and inhibition of the ERK1/ERK2 (MAPK3/MAPK1, respectively) signaling pathway. May also participate in UV radiation-induced apoptosis and have a ligand-independent stimulatory effect on chemotactic cell migration. During development, may function in distinctive aspects of pattern formation and subsequently in development of several fetal tissues. Involved for instance in angiogenesis, in early hindbrain development and epithelial proliferation and branching morphogenesis during mammary gland development. Engaged by the ligand ephrin-A5/EFNA5 may regulate lens fiber cells shape and interactions and be important for lens transparency development and maintenance. With ephrin-A2/EFNA2 may play a role in bone remodeling through regulation of osteoclastogenesis and osteoblastogenesis. In terms of biological role, (Microbial infection) Acts as a receptor for hepatitis C virus (HCV) in hepatocytes and facilitates its cell entry. Mediates HCV entry by promoting the formation of the CD81-CLDN1 receptor complexes that are essential for HCV entry and by enhancing membrane fusion of cells expressing HCV envelope glycoproteins. Its function is as follows. Acts as a receptor for human cytomegalovirus (HCMV) to mediate viral entry and fusion in glioblastoma cells. This chain is Ephrin type-A receptor 2 (EPHA2), found in Homo sapiens (Human).